The following is a 517-amino-acid chain: Protein MGF 505-2R (517 aa).

It belongs to the asfivirus MGF 505 family.

In terms of biological role, plays a role in virus cell tropism, and may be required for efficient virus replication in macrophages. The chain is Protein MGF 505-2R from Ornithodoros (relapsing fever ticks).